The chain runs to 439 residues: Ribosomal protein uS12 methylthiotransferase RimO (439 aa).

Positions 7 to 119 (KQLCLISLGC…IDIMIAKKQN (113 aa)) constitute an MTTase N-terminal domain. Cys-16, Cys-50, Cys-82, Cys-151, Cys-155, and Cys-158 together coordinate [4Fe-4S] cluster. In terms of domain architecture, Radical SAM core spans 137–368 (TGSSVHAYVK…ALKHQNHSFK (232 aa)).

The protein belongs to the methylthiotransferase family. RimO subfamily. [4Fe-4S] cluster is required as a cofactor.

It is found in the cytoplasm. The enzyme catalyses L-aspartate(89)-[ribosomal protein uS12]-hydrogen + (sulfur carrier)-SH + AH2 + 2 S-adenosyl-L-methionine = 3-methylsulfanyl-L-aspartate(89)-[ribosomal protein uS12]-hydrogen + (sulfur carrier)-H + 5'-deoxyadenosine + L-methionine + A + S-adenosyl-L-homocysteine + 2 H(+). Its function is as follows. Catalyzes the methylthiolation of an aspartic acid residue of ribosomal protein uS12. This chain is Ribosomal protein uS12 methylthiotransferase RimO, found in Helicobacter pylori (strain ATCC 700392 / 26695) (Campylobacter pylori).